The primary structure comprises 118 residues: Small ribosomal subunit protein uS13 (118 aa).

The interval 94–118 (GLPVRGQRTQTNARTRKGPRRLARK) is disordered. The span at 107-118 (RTRKGPRRLARK) shows a compositional bias: basic residues.

It belongs to the universal ribosomal protein uS13 family. In terms of assembly, part of the 30S ribosomal subunit. Forms a loose heterodimer with protein S19. Forms two bridges to the 50S subunit in the 70S ribosome.

Functionally, located at the top of the head of the 30S subunit, it contacts several helices of the 16S rRNA. In the 70S ribosome it contacts the 23S rRNA (bridge B1a) and protein L5 of the 50S subunit (bridge B1b), connecting the 2 subunits; these bridges are implicated in subunit movement. Contacts the tRNAs in the A and P-sites. This is Small ribosomal subunit protein uS13 from Nitrosococcus oceani (strain ATCC 19707 / BCRC 17464 / JCM 30415 / NCIMB 11848 / C-107).